The primary structure comprises 634 residues: DNA-directed RNA polymerase subunit gamma (634 aa).

Residues Cys74, Cys76, Cys89, and Cys92 each coordinate Zn(2+). Residues Asp471, Asp473, and Asp475 each contribute to the Mg(2+) site.

Belongs to the RNA polymerase beta' chain family. RpoC1 subfamily. As to quaternary structure, in cyanobacteria the RNAP catalytic core is composed of 2 alpha, 1 beta, 1 beta', 1 gamma and 1 omega subunit. When a sigma factor is associated with the core the holoenzyme is formed, which can initiate transcription. The cofactor is Mg(2+). Requires Zn(2+) as cofactor.

It carries out the reaction RNA(n) + a ribonucleoside 5'-triphosphate = RNA(n+1) + diphosphate. In terms of biological role, DNA-dependent RNA polymerase catalyzes the transcription of DNA into RNA using the four ribonucleoside triphosphates as substrates. This Synechococcus sp. (strain RCC307) protein is DNA-directed RNA polymerase subunit gamma.